The primary structure comprises 362 residues: Thiol protease aleurain (362 aa).

An N-terminal signal peptide occupies residues 1-22; the sequence is MAHARVLLLALAVLATAAVAVA. A propeptide spans 23 to 143 (activation peptide); that stretch reads SSSSFADSNP…GNHLMRDAAA (121 aa). Intrachain disulfides connect cysteine 165/cysteine 208 and cysteine 199/cysteine 241. The active site involves cysteine 168. Asparagine 188 carries an N-linked (GlcNAc...) asparagine glycan. The N-linked (GlcNAc...) asparagine glycan is linked to asparagine 257. A disulfide bond links cysteine 299 and cysteine 349. Residues histidine 308 and asparagine 328 contribute to the active site.

This sequence belongs to the peptidase C1 family.

It is found in the vacuole. It catalyses the reaction Hydrolysis of proteins, acting as an aminopeptidase (notably, cleaving Arg-|-Xaa bonds) as well as an endopeptidase.. In terms of biological role, may play a role in proteolysis leading to mobilization of nitrogen during senescence and starvation. This Hordeum vulgare (Barley) protein is Thiol protease aleurain.